The primary structure comprises 126 residues: Thioredoxin domain-containing protein, mitochondrial (126 aa).

Residues 14–120 (SQKIATNTSF…ILEFLNHIET (107 aa)) form the Thioredoxin domain.

This sequence belongs to the thioredoxin family.

Its subcellular location is the mitochondrion. In Dictyostelium discoideum (Social amoeba), this protein is Thioredoxin domain-containing protein, mitochondrial.